Here is a 243-residue protein sequence, read N- to C-terminus: Cell division protein ZipA (243 aa).

At 1–4 the chain is on the periplasmic side; the sequence is MSDV. A helical membrane pass occupies residues 5 to 25; it reads TLLRIGIAIVGILFVAAVFFF. Residues 26 to 243 are Cytoplasmic-facing; it reads STPKTSAHRV…VPPLIKNSRW (218 aa). The tract at residues 32 to 89 is disordered; that stretch reads AHRVRTKKEEPPRERREPMLSTEVDNSPHQSVDEVPASVPQQQVNPEATKPGEIELGK. Over residues 38 to 49 the composition is skewed to basic and acidic residues; it reads KKEEPPRERREP.

It belongs to the ZipA family. In terms of assembly, interacts with FtsZ via their C-terminal domains.

The protein resides in the cell inner membrane. Functionally, essential cell division protein that stabilizes the FtsZ protofilaments by cross-linking them and that serves as a cytoplasmic membrane anchor for the Z ring. Also required for the recruitment to the septal ring of downstream cell division proteins. This is Cell division protein ZipA from Xylella fastidiosa (strain Temecula1 / ATCC 700964).